The sequence spans 222 residues: Non-structural protein V (222 aa).

A disordered region spans residues 61–107 (ESTNHQKGSVGGGAKPKKPRPKIAIVPADDKTVPGKPIPNPLLGLDS). Zn(2+)-binding residues include His-171, Cys-190, Cys-194, Cys-206, Cys-208, Cys-211, Cys-215, and Cys-218.

It belongs to the paramyxoviruses V protein family. As to quaternary structure, interacts with host DDB1, STAT2 and IFIH1/MDA5. Interacts with host RIGI regulatory protein (via CARDs domain) and host TRIM25 (via SPRY domain); these interactions prevent TRIM25-mediated ubiquitination of RIG-I and disrupts downstream RIG-I signaling.

The protein resides in the host cytoplasm. In terms of biological role, plays an essential role in the inhibition of host immune response. Prevents the establishment of cellular antiviral state by blocking interferon-alpha/beta (IFN-alpha/beta) production and signaling pathway. Interacts with host IFIH1/MDA5 and DHX58/LGP2 to inhibit the transduction pathway involved in the activation of IFN-beta promoter, thus protecting the virus against cell antiviral state. Efficiently blocks type I IFN signaling following infection by behaving as a substrate receptor for CUL4-DDB1 E3 ligase complex and targeting host STAT1 for proteasomal degradation. Blocks the type I interferon signaling pathway by disrupting the RIG-I signaling pathway. The polypeptide is Non-structural protein V (P/V) (Parainfluenza virus 5 (strain W3) (PIV5)).